The sequence spans 465 residues: Sensor histidine kinase ZraS (465 aa).

The Cytoplasmic segment spans residues 1–14 (MRFMQRSKDSLAKW). A helical transmembrane segment spans residues 15-35 (LSAILPVVIVGLVGLFAVTVI). Residues 36 to 201 (RDYGRASEAD…ATQSGEKRNT (166 aa)) are Periplasmic-facing. Residues 202 to 222 (LIILFALATVLLASVLSFFWY) form a helical membrane-spanning segment. Topologically, residues 223–465 (RRYLRSRQLL…VNITRKDPQG (243 aa)) are cytoplasmic. In terms of domain architecture, Histidine kinase spans 251–458 (GVAHEIRNPL…TFTLWLPVNI (208 aa)). A Phosphohistidine; by autocatalysis modification is found at H254.

Post-translationally, autophosphorylated.

It localises to the cell inner membrane. It carries out the reaction ATP + protein L-histidine = ADP + protein N-phospho-L-histidine.. Activity of the ZraS/ZraR two-component system is repressed by the zinc-bound form of ZraP, which probably interacts with the periplasmic region of ZraS. Part of the Zra signaling pathway, an envelope stress response (ESR) system composed of the periplasmic accessory protein ZraP, the histidine kinase ZraS and the transcriptional regulator ZraR. The ZraPSR system contributes to antibiotic resistance and is important for membrane integrity in the presence of membrane-targeting biocides. ZraS is a member of the two-component regulatory system ZraS/ZraR. Functions as a membrane-associated sensor kinase that phosphorylates ZraR in response to high concentrations of Zn(2+) or Pb(2+) in the medium. Binds one zinc molecule with high affinity via its periplasmic domain, inducing a conformational change that is transmitted to the histidine kinase domain and leads to the activation of ZraR. The system has no direct role in zinc or copper resistance. In Escherichia coli (strain K12), this protein is Sensor histidine kinase ZraS.